Here is a 444-residue protein sequence, read N- to C-terminus: Phosphoglucosamine mutase (444 aa).

The active-site Phosphoserine intermediate is serine 102. Serine 102, aspartate 241, aspartate 243, and aspartate 245 together coordinate Mg(2+). Phosphoserine is present on serine 102.

This sequence belongs to the phosphohexose mutase family. Mg(2+) serves as cofactor. In terms of processing, activated by phosphorylation.

The catalysed reaction is alpha-D-glucosamine 1-phosphate = D-glucosamine 6-phosphate. Catalyzes the conversion of glucosamine-6-phosphate to glucosamine-1-phosphate. The sequence is that of Phosphoglucosamine mutase from Acidovorax ebreus (strain TPSY) (Diaphorobacter sp. (strain TPSY)).